A 267-amino-acid polypeptide reads, in one-letter code: MPIQRKELPDVGELVVATVKEVYDYGAYLTLDEYGGLEAYLPWSEVASRWVRSIHDVVKPGQKIVVKVIRVNKRKKQVDVSLKRVTDSERRRKMMEWKRAQKAERILELVAQKLGKSLEEAYEAVGKKLEDYYGELMAAFEEVVIRGEQALREAGVPEEWVQPLLEEIKRHVEVKRVKIAGVLTVRSLAGDGIERVKKVLLTVKDAIENSSPDIKVKLYTVGAPRYRLELEAYDYKTLEKALAKALEEGEETAKSLGVEFSFTREKQ.

Residues 12–83 (GELVVATVKE…RKKQVDVSLK (72 aa)) form the S1 motif domain.

It belongs to the eIF-2-alpha family. As to quaternary structure, heterotrimer composed of an alpha, a beta and a gamma chain.

EIF-2 functions in the early steps of protein synthesis by forming a ternary complex with GTP and initiator tRNA. The protein is Translation initiation factor 2 subunit alpha of Hyperthermus butylicus (strain DSM 5456 / JCM 9403 / PLM1-5).